We begin with the raw amino-acid sequence, 198 residues long: Coagulation factor XIII A chain (198 aa).

The interval 1 to 36 (MSESSGTAFGGRRAIPPNTSNAAENDPPTVELQGLV) is disordered. Residue serine 2 is modified to N-acetylserine. A propeptide spans 2-38 (SESSGTAFGGRRAIPPNTSNAAENDPPTVELQGLVPR) (activation peptide).

It belongs to the transglutaminase superfamily. Transglutaminase family. As to quaternary structure, tetramer of two A chains (F13A1) and two B (F13B) chains. It depends on Ca(2+) as a cofactor. Post-translationally, the activation peptide is released by thrombin.

Its subcellular location is the cytoplasm. The protein resides in the secreted. The enzyme catalyses L-glutaminyl-[protein] + L-lysyl-[protein] = [protein]-L-lysyl-N(6)-5-L-glutamyl-[protein] + NH4(+). Its function is as follows. Factor XIII is activated by thrombin and calcium ion to a transglutaminase that catalyzes the formation of gamma-glutamyl-epsilon-lysine cross-links between fibrin chains, thus stabilizing the fibrin clot. Also cross-link alpha-2-plasmin inhibitor, or fibronectin, to the alpha chains of fibrin. The protein is Coagulation factor XIII A chain (F13A1) of Bos taurus (Bovine).